The sequence spans 411 residues: ATP-dependent Clp protease ATP-binding subunit ClpX (411 aa).

In terms of domain architecture, ClpX-type ZB spans methionine 1–valine 49. Positions 8, 11, 30, and 33 each coordinate Zn(2+). Proline 115 to leucine 122 is an ATP binding site.

The protein belongs to the ClpX chaperone family. In terms of assembly, component of the ClpX-ClpP complex. Forms a hexameric ring that, in the presence of ATP, binds to fourteen ClpP subunits assembled into a disk-like structure with a central cavity, resembling the structure of eukaryotic proteasomes.

ATP-dependent specificity component of the Clp protease. It directs the protease to specific substrates. Can perform chaperone functions in the absence of ClpP. In Dictyoglomus thermophilum (strain ATCC 35947 / DSM 3960 / H-6-12), this protein is ATP-dependent Clp protease ATP-binding subunit ClpX.